The following is a 570-amino-acid chain: Pyruvate decarboxylase (570 aa).

Positions 1–2 are cleaved as a propeptide — removed in mature form; sequence MV. Substrate contacts are provided by aspartate 33 and histidine 120. The thiamine pyrophosphate binding stretch occupies residues 394-476; it reads DSWFNGIQLK…MLINNRGYTI (83 aa). Mg(2+)-binding residues include aspartate 444, asparagine 471, and glycine 473. Glutamate 477 contributes to the substrate binding site.

Belongs to the TPP enzyme family. As to quaternary structure, homomer. Requires a metal cation as cofactor. It depends on thiamine diphosphate as a cofactor.

It is found in the cytoplasm. It carries out the reaction a 2-oxocarboxylate + H(+) = an aldehyde + CO2. The protein operates within carbohydrate metabolism; pyruvate metabolism. This chain is Pyruvate decarboxylase (cfp), found in Neurospora crassa (strain ATCC 24698 / 74-OR23-1A / CBS 708.71 / DSM 1257 / FGSC 987).